We begin with the raw amino-acid sequence, 555 residues long: Spermine oxidase (555 aa).

Residues A35, E55, R63, 79 to 80, and V261 contribute to the FAD site; that span reads TW. The segment at 271 to 306 is disordered; that stretch reads ARPRGPEIEPRGEGDHNHDTGEGGQGGEEPRGGRWD. The segment covering 274–291 has biased composition (basic and acidic residues); that stretch reads RGPEIEPRGEGDHNHDTG. FAD-binding positions include E519 and 528-529; that span reads TT.

This sequence belongs to the flavin monoamine oxidase family. Requires FAD as cofactor. Widely expressed. Expressed in human tumor cell lines. Isoform 4 is only found in an embryonal kidney cell line.

The protein localises to the cytoplasm. The protein resides in the nucleus. It catalyses the reaction spermine + O2 + H2O = 3-aminopropanal + spermidine + H2O2. It participates in amine and polyamine degradation; spermine degradation. Inhibited at more than 90% by SL-11144, SL-11150 and SL-11158, at concentrations less than 1 uM. Functionally, flavoenzyme which catalyzes the oxidation of spermine to spermidine. Can also use N(1)-acetylspermine and spermidine as substrates, with different affinity depending on the isoform (isozyme) and on the experimental conditions. Plays an important role in the regulation of polyamine intracellular concentration and has the potential to act as a determinant of cellular sensitivity to the antitumor polyamine analogs. May contribute to beta-alanine production via aldehyde dehydrogenase conversion of 3-amino-propanal. In Homo sapiens (Human), this protein is Spermine oxidase (SMOX).